The following is a 371-amino-acid chain: Putative glutamate--cysteine ligase 2 (371 aa).

The protein belongs to the glutamate--cysteine ligase type 2 family. YbdK subfamily. As to quaternary structure, homodimer.

It carries out the reaction L-cysteine + L-glutamate + ATP = gamma-L-glutamyl-L-cysteine + ADP + phosphate + H(+). Its function is as follows. ATP-dependent carboxylate-amine ligase which exhibits weak glutamate--cysteine ligase activity. In Cronobacter sakazakii (strain ATCC BAA-894) (Enterobacter sakazakii), this protein is Putative glutamate--cysteine ligase 2.